The primary structure comprises 200 residues: MLKVGLTGGIGSGKSSVARRLAAHGALVIDADAIAREVVEPGTPALAEIVAEFGDQVLTPEGRLDRARLGEIVFADETKLARLNAIVHPRVGERTQELMAQAKEGTIVVYDVPLLVENNLADQYDVVIVVDVPVHTQVERVTANRGMPEEQVRARINAQASREQRRAVADIIIDNSGTEEELDARVAEVWEELQRRLHSR.

In terms of domain architecture, DPCK spans 3-200; that stretch reads KVGLTGGIGS…EELQRRLHSR (198 aa). ATP is bound at residue 11–16; that stretch reads GSGKSS.

The protein belongs to the CoaE family.

Its subcellular location is the cytoplasm. The enzyme catalyses 3'-dephospho-CoA + ATP = ADP + CoA + H(+). The protein operates within cofactor biosynthesis; coenzyme A biosynthesis; CoA from (R)-pantothenate: step 5/5. Its function is as follows. Catalyzes the phosphorylation of the 3'-hydroxyl group of dephosphocoenzyme A to form coenzyme A. This chain is Dephospho-CoA kinase, found in Thermobifida fusca (strain YX).